The chain runs to 207 residues: Large ribosomal subunit protein uL4 (207 aa).

Residues 59–78 (GSGKKPFKQKGTGQARQGCK) form a disordered region.

It belongs to the universal ribosomal protein uL4 family. Part of the 50S ribosomal subunit.

In terms of biological role, one of the primary rRNA binding proteins, this protein initially binds near the 5'-end of the 23S rRNA. It is important during the early stages of 50S assembly. It makes multiple contacts with different domains of the 23S rRNA in the assembled 50S subunit and ribosome. Its function is as follows. Forms part of the polypeptide exit tunnel. In Geotalea daltonii (strain DSM 22248 / JCM 15807 / FRC-32) (Geobacter daltonii), this protein is Large ribosomal subunit protein uL4.